Consider the following 567-residue polypeptide: NAC domain-containing protein 78 (567 aa).

The NAC domain occupies 9 to 159; sequence LAPGFRFHPT…AYVLCRIFQK (151 aa). The DNA-binding element occupies 108-165; the sequence is VGMKKTLVYHKGRAPRGERTNWVMHEYRLSDEDLKKAGVPQEAYVLCRIFQKSGTGPK. A disordered region spans residues 393–436; it reads NQEALDQKPAPKELEKEVAGGKEAVEEKESGEGSSSKQDTDFKD. Basic and acidic residues predominate over residues 397–423; it reads LDQKPAPKELEKEVAGGKEAVEEKESG. A helical membrane pass occupies residues 544 to 564; sequence LVFMCLWVLLLSVSFKIVTMV.

Expressed in root meristem. Expressed in roots, rosette leaves, cauline leaves, shoot apex, stems and flowers.

It is found in the membrane. It localises to the nucleus. Its function is as follows. Transcriptional activator activated by proteolytic cleavage through regulated intramembrane proteolysis (RIP). Transcripition activator associated with the induction of genes related to flavonoid biosynthesis and required for the accumulation of anthocyanins in response to high light stress. Plays a role in the regulation of 20S and 26S proteasomes in response to high light stress. This Arabidopsis thaliana (Mouse-ear cress) protein is NAC domain-containing protein 78 (NAC078).